The primary structure comprises 531 residues: Splicing factor ESS-2 (531 aa).

Disordered regions lie at residues 104–163 (RTPI…RKKK) and 453–531 (PFAS…GDFF). The span at 105–114 (TPITTRSTTE) shows a compositional bias: polar residues. Composition is skewed to low complexity over residues 125–136 (TPGPSSASTSSA) and 464–477 (SRPS…TPGS). Polar residues predominate over residues 480 to 498 (SRGSTTPGSSWSQGAQTPG).

This sequence belongs to the ESS2 family.

The protein localises to the nucleus. Functionally, regulates pre-mRNA splicing. The chain is Splicing factor ESS-2 (ess-2) from Caenorhabditis elegans.